The primary structure comprises 868 residues: Monofunctional pimaradiene synthase (868 aa).

5 residues coordinate Mg(2+): Asp620, Asp624, Asn764, Thr768, and Glu772.

It belongs to the terpene synthase family. Tpsd subfamily. Mg(2+) is required as a cofactor.

It catalyses the reaction (+)-copalyl diphosphate = (-)-pimara-8(14),15-diene + diphosphate. It participates in terpene metabolism; oleoresin biosynthesis. Involved in defensive oleoresin formation in conifers in response to insect attack or other injury. Involved in diterpene (C20) olefins biosynthesis. Monofunctional enzyme lacking the DXDD motif in the class II active site relevant for the cyclization of geranylgeranyl diphosphate (GGPP). Requires (+)-copalyl diphosphate ((+)-CPP) as substrate, but no activity with GGPP or ent-CPP. Pimaradiene is the major products of the enzyme. This is Monofunctional pimaradiene synthase from Pinus contorta (Shore pine).